The sequence spans 99 residues: Mitochondrial import receptor subunit TOM9-2 (99 aa).

Residues 2–51 (AAKRIGAGKSGGGDPNILARISNSEIVSQGRRAAGDAVEVSKKLLRSTGK) lie on the Cytoplasmic side of the membrane. A helical membrane pass occupies residues 52–69 (AAWIAGTTFLILVVPLII). The Mitochondrial intermembrane segment spans residues 70-99 (EMDREAQINEIELQQASLLGAPPSPMQRGL).

The protein belongs to the Tom22 family. In terms of assembly, forms part of the preprotein translocase complex of the outer mitochondrial membrane (TOM complex) which consists of at least 6 different proteins (TOM5, TOM6, TOM7, TOM20, TOM22/TOM9 and TOM40). Expressed in young cotyledons, roots, flowers and leaves.

The protein localises to the mitochondrion outer membrane. Its function is as follows. Central component of the receptor complex responsible for the recognition and translocation of cytosolically synthesized mitochondrial preproteins. Together with TOM20 functions as the transit peptide receptor at the surface of the mitochondrion outer membrane and facilitates the movement of preproteins into the translocation pore. The protein is Mitochondrial import receptor subunit TOM9-2 (TOM9-2) of Arabidopsis thaliana (Mouse-ear cress).